The following is a 1705-amino-acid chain: Intersectin-1 (1705 aa).

EH domains lie at 21 to 109 (ERAK…PVAM) and 220 to 309 (SRLK…SFRR). EF-hand domains follow at residues 53-88 (LPQPVLAQIWALADMNNDGRMDQLEFSIAMKLIKLK) and 253-288 (LPQSQLATIWNLSDIDQDGKLTAEEFILAMHLIDVA). Residues aspartate 66, asparagine 68, aspartate 70, arginine 72, glutamate 77, aspartate 266, aspartate 268, aspartate 270, lysine 272, and glutamate 277 each coordinate Ca(2+). Disordered stretches follow at residues 322–355 (VSVDQRLPEEPEEEEPQNADKKLPVTFEDKKREN), 386–433 (RAEQ…ERRE), and 668–708 (RYKF…PPEP). The interval 325 to 697 (DQRLPEEPEE…VEKKPEIQEK (373 aa)) is KLERQ. Residues 339-355 (NADKKLPVTFEDKKREN) show a composition bias toward basic and acidic residues. A coiled-coil region spans residues 350 to 687 (DKKRENFERG…KREESIQKCE (338 aa)). Over residues 668–699 (RYKFQDEEKEKREESIQKCEVEKKPEIQEKPN) the composition is skewed to basic and acidic residues. The region spanning 732–793 (VKVVYYRALY…PANYAERMPE (62 aa)) is the SH3 1 domain. Positions 823-833 (AFTNTSTNSNN) are enriched in low complexity. A disordered region spans residues 823–851 (AFTNTSTNSNNWADFSSTWPTNNTDKVES). A compositionally biased stretch (polar residues) spans 834 to 846 (WADFSSTWPTNNT). One can recognise an SH3 2 domain in the interval 897–955 (VEGLQAQALYPWRAKKDNHLNFNKNDVITVLEQQDMWWFGEVQGQKGWFPKSYVKLISG). The interval 959–978 (KSTSIDSTSSESPASLKRVS) is disordered. Low complexity predominate over residues 960–973 (STSIDSTSSESPAS). 3 consecutive SH3 domains span residues 986-1044 (IQGE…PKDS), 1058-1122 (KKPE…LLSP), and 1139-1198 (PPTC…LTTD). The Bipartite nuclear localization signal; in isoform 2 signature appears at 1088–1111 (RKKNPGGWWEGELQARGKKRQIGW). Residues 1221 to 1407 (KRQGYIHELI…EELCSQVNEG (187 aa)) enclose the DH domain. A PH domain is found at 1446 to 1555 (KFLHSGKLYK…WVQKIKAASE (110 aa)). The C2 domain occupies 1563–1679 (KKREKAYLVR…KKDQGSKGPV (117 aa)). Residues aspartate 1651, serine 1654, and aspartate 1657 each contribute to the Ca(2+) site.

Binds epn1 and epn2. The cofactor is Ca(2+).

The protein resides in the endomembrane system. Its subcellular location is the synapse. The protein localises to the synaptosome. It is found in the cell projection. It localises to the lamellipodium. The protein resides in the cell membrane. Its subcellular location is the membrane. The protein localises to the clathrin-coated pit. It is found in the recycling endosome. It localises to the cytoplasm. The protein resides in the nucleus envelope. Its function is as follows. Adapter protein that provides a link between the endocytic membrane traffic and the actin assembly machinery. Acts as a guanine nucleotide exchange factor (GEF) for cdc42, and thereby stimulates actin nucleation mediated by wasl and the arp2/3 complex. Involved in endocytosis of activated egfr, and probably also other growth factor receptors. The protein is Intersectin-1 (itsn1) of Xenopus laevis (African clawed frog).